Here is a 254-residue protein sequence, read N- to C-terminus: UPF0246 protein BDI_1226 (254 aa).

This sequence belongs to the UPF0246 family.

This Parabacteroides distasonis (strain ATCC 8503 / DSM 20701 / CIP 104284 / JCM 5825 / NCTC 11152) protein is UPF0246 protein BDI_1226.